The chain runs to 809 residues: Phenylalanine--tRNA ligase beta subunit (809 aa).

The 114-residue stretch at 39–152 folds into the tRNA-binding domain; it reads KDKWPNVYVG…ADAPVGMLAS (114 aa). The B5 domain maps to 404–492; it reads KDRNSVVLSL…RIAGYDTIPC (89 aa). Residues D470, D476, E479, and E480 each coordinate Mg(2+). Residues 717–808 form the FDX-ACB domain; it reads NRFPSVERDL…LNTETGAVLR (92 aa).

Belongs to the phenylalanyl-tRNA synthetase beta subunit family. Type 1 subfamily. As to quaternary structure, tetramer of two alpha and two beta subunits. Mg(2+) is required as a cofactor.

The protein localises to the cytoplasm. The enzyme catalyses tRNA(Phe) + L-phenylalanine + ATP = L-phenylalanyl-tRNA(Phe) + AMP + diphosphate + H(+). In Dehalococcoides mccartyi (strain ATCC BAA-2266 / KCTC 15142 / 195) (Dehalococcoides ethenogenes (strain 195)), this protein is Phenylalanine--tRNA ligase beta subunit.